A 168-amino-acid polypeptide reads, in one-letter code: Putative defense protein 1 (168 aa).

Positions 1 to 18 (MMFAYIVAVVSALALTSA) are cleaved as a signal peptide. The Reelin domain occupies 19–168 (FPTGAPRSAC…SAPVKILSHH (150 aa)). Residues Cys-28 and Cys-105 are joined by a disulfide bond.

This sequence belongs to the insect defense protein family. As to expression, very highly expressed in midgut, and highly expressed in fat body, silk gland and epidermis.

The protein localises to the secreted. As this protein is expressed upon bacterial infection, it may have antimicrobial activity. The chain is Putative defense protein 1 from Antheraea mylitta (Tasar silkworm).